The following is a 420-amino-acid chain: Serine hydroxymethyltransferase (420 aa).

Residues Leu-121 and 125–127 each bind (6S)-5,6,7,8-tetrahydrofolate; that span reads GHL. Position 229 is an N6-(pyridoxal phosphate)lysine (Lys-229). 355–357 is a (6S)-5,6,7,8-tetrahydrofolate binding site; the sequence is SPF.

It belongs to the SHMT family. In terms of assembly, homodimer. It depends on pyridoxal 5'-phosphate as a cofactor.

It is found in the cytoplasm. It catalyses the reaction (6R)-5,10-methylene-5,6,7,8-tetrahydrofolate + glycine + H2O = (6S)-5,6,7,8-tetrahydrofolate + L-serine. It functions in the pathway one-carbon metabolism; tetrahydrofolate interconversion. The protein operates within amino-acid biosynthesis; glycine biosynthesis; glycine from L-serine: step 1/1. Its function is as follows. Catalyzes the reversible interconversion of serine and glycine with tetrahydrofolate (THF) serving as the one-carbon carrier. This reaction serves as the major source of one-carbon groups required for the biosynthesis of purines, thymidylate, methionine, and other important biomolecules. Also exhibits THF-independent aldolase activity toward beta-hydroxyamino acids, producing glycine and aldehydes, via a retro-aldol mechanism. In Chromohalobacter salexigens (strain ATCC BAA-138 / DSM 3043 / CIP 106854 / NCIMB 13768 / 1H11), this protein is Serine hydroxymethyltransferase.